A 277-amino-acid polypeptide reads, in one-letter code: Shikimate dehydrogenase (NADP(+)) (277 aa).

Residues 18-20 and Thr-65 each bind shikimate; that span reads SKS. Residue Lys-69 is the Proton acceptor of the active site. Glu-81 provides a ligand contact to NADP(+). Asn-90 and Asp-106 together coordinate shikimate. NADP(+)-binding positions include 130–134, 154–159, and Met-217; these read GAGGA and NRTFSK. Tyr-219 provides a ligand contact to shikimate. Gly-241 contacts NADP(+).

The protein belongs to the shikimate dehydrogenase family. Homodimer.

The enzyme catalyses shikimate + NADP(+) = 3-dehydroshikimate + NADPH + H(+). The protein operates within metabolic intermediate biosynthesis; chorismate biosynthesis; chorismate from D-erythrose 4-phosphate and phosphoenolpyruvate: step 4/7. Functionally, involved in the biosynthesis of the chorismate, which leads to the biosynthesis of aromatic amino acids. Catalyzes the reversible NADPH linked reduction of 3-dehydroshikimate (DHSA) to yield shikimate (SA). This chain is Shikimate dehydrogenase (NADP(+)), found in Vibrio parahaemolyticus serotype O3:K6 (strain RIMD 2210633).